A 1058-amino-acid chain; its full sequence is Isoleucine--tRNA ligase (1058 aa).

The 'HIGH' region motif lies at 48–58 (PYTTGHIHLGT). A 'KMSKS' region motif is present at residues 596-600 (KMSKS). K599 serves as a coordination point for ATP.

This sequence belongs to the class-I aminoacyl-tRNA synthetase family. IleS type 2 subfamily. Monomer. The cofactor is Zn(2+).

It localises to the cytoplasm. It catalyses the reaction tRNA(Ile) + L-isoleucine + ATP = L-isoleucyl-tRNA(Ile) + AMP + diphosphate. Catalyzes the attachment of isoleucine to tRNA(Ile). As IleRS can inadvertently accommodate and process structurally similar amino acids such as valine, to avoid such errors it has two additional distinct tRNA(Ile)-dependent editing activities. One activity is designated as 'pretransfer' editing and involves the hydrolysis of activated Val-AMP. The other activity is designated 'posttransfer' editing and involves deacylation of mischarged Val-tRNA(Ile). The polypeptide is Isoleucine--tRNA ligase (Methanosarcina barkeri (strain Fusaro / DSM 804)).